A 405-amino-acid polypeptide reads, in one-letter code: Tryptophan synthase beta chain (405 aa).

Residue K98 is modified to N6-(pyridoxal phosphate)lysine.

Belongs to the TrpB family. As to quaternary structure, tetramer of two alpha and two beta chains. It depends on pyridoxal 5'-phosphate as a cofactor.

The catalysed reaction is (1S,2R)-1-C-(indol-3-yl)glycerol 3-phosphate + L-serine = D-glyceraldehyde 3-phosphate + L-tryptophan + H2O. It participates in amino-acid biosynthesis; L-tryptophan biosynthesis; L-tryptophan from chorismate: step 5/5. In terms of biological role, the beta subunit is responsible for the synthesis of L-tryptophan from indole and L-serine. This Xanthomonas euvesicatoria pv. vesicatoria (strain 85-10) (Xanthomonas campestris pv. vesicatoria) protein is Tryptophan synthase beta chain.